A 206-amino-acid chain; its full sequence is Small ribosomal subunit protein uS4 (206 aa).

Residues C96–E160 form the S4 RNA-binding domain.

The protein belongs to the universal ribosomal protein uS4 family. In terms of assembly, part of the 30S ribosomal subunit. Contacts protein S5. The interaction surface between S4 and S5 is involved in control of translational fidelity.

In terms of biological role, one of the primary rRNA binding proteins, it binds directly to 16S rRNA where it nucleates assembly of the body of the 30S subunit. Functionally, with S5 and S12 plays an important role in translational accuracy. This Pseudomonas putida (strain GB-1) protein is Small ribosomal subunit protein uS4.